Reading from the N-terminus, the 101-residue chain is Putative UPF0377 protein YBL108W (101 aa).

This sequence belongs to the UPF0377 family.

The sequence is that of Putative UPF0377 protein YBL108W from Saccharomyces cerevisiae (strain ATCC 204508 / S288c) (Baker's yeast).